A 629-amino-acid polypeptide reads, in one-letter code: Hemocyanin G chain (629 aa).

Histidine 171, histidine 175, histidine 202, histidine 322, histidine 326, and histidine 362 together coordinate Cu cation. Residues asparagine 447 and asparagine 506 are each glycosylated (N-linked (GlcNAc...) asparagine). Residues cysteine 534 and cysteine 582 are joined by a disulfide bond. N-linked (GlcNAc...) asparagine glycosylation is present at asparagine 615.

It belongs to the tyrosinase family. Hemocyanin subfamily. As to quaternary structure, tarantula hemocyanin is a 24-chain polymer with seven different chains identified. Hemolymph.

The protein resides in the secreted. It is found in the extracellular space. In terms of biological role, hemocyanins are copper-containing oxygen carriers occurring freely dissolved in the hemolymph of many mollusks and arthropods. The sequence is that of Hemocyanin G chain (HCG) from Aphonopelma sp. (American tarantula).